The following is a 353-amino-acid chain: Lipase ZK262.3 (353 aa).

Residues 1-22 (MPKNLRFSVFLLFLLCINSVFG) form the signal peptide. 2 N-linked (GlcNAc...) asparagine glycosylation sites follow: Asn-32 and Asn-64. The active-site Nucleophile is the Ser-163. Catalysis depends on Asp-221, which acts as the Charge relay system. The N-linked (GlcNAc...) asparagine glycan is linked to Asn-267. A disulfide bridge connects residues Cys-277 and Cys-288. His-306 (charge relay system) is an active-site residue.

The protein belongs to the AB hydrolase superfamily. Lipase family.

It is found in the secreted. Its function is as follows. Probable lipase. The chain is Lipase ZK262.3 from Caenorhabditis elegans.